The sequence spans 417 residues: Odorant receptor 65a (417 aa).

Topologically, residues 1–62 (MTELRSERKN…MNSEQRRLPR (62 aa)) are cytoplasmic. Residues 63–83 (IVAWQYFVSIQLATALASLFY) traverse the membrane as a helical segment. The Extracellular portion of the chain corresponds to 84–98 (GISESIGDIVNLGRD). Residues 99 to 119 (LVFIITIIFICFRLVFFAQYA) traverse the membrane as a helical segment. The Cytoplasmic segment spans residues 120-152 (GELDVIIDALEDIYHWSIKGPATKEVQETKRLH). A helical transmembrane segment spans residues 153–173 (FLLFMALIITWFSFLILFMLI). Residues 174–206 (KISTPFWIESQTLPFHVSWPFQLHDPSKHPIAY) are Extracellular-facing. The helical transmembrane segment at 207–227 (IIIFVSQSTTMLYFLIWLGVV) threads the bilayer. Topologically, residues 228–290 (ENMGVSLFFE…TDRCNHIFNG (63 aa)) are cytoplasmic. Residues 291–311 (AFIMQMLINFLLVSLSLFEVL) form a helical membrane-spanning segment. The Extracellular portion of the chain corresponds to 312-316 (AAKKN). The helical transmembrane segment at 317-337 (PQVAVEYMIIMLMTLGHLSFW) threads the bilayer. At 338-393 (SKFGDMFSKESEQVALAVYEAYDPNVGSKSIHRQFCFFIQRAQKPLIMKASPFPPF) the chain is on the cytoplasmic side. A helical transmembrane segment spans residues 394–414 (NLENYMFILKQCYSILTILAN). The Extracellular segment spans residues 415 to 417 (TLE).

This sequence belongs to the insect chemoreceptor superfamily. Heteromeric odorant receptor channel (TC 1.A.69) family. Or49a subfamily. Interacts with Orco. Complexes exist early in the endomembrane system in olfactory sensory neurons (OSNs), coupling these complexes to the conserved ciliary trafficking pathway. Expressed in olfactory sensory neurons in the antenna.

The protein resides in the cell membrane. Functionally, odorant receptor which mediates acceptance or avoidance behavior, depending on its substrates. The odorant receptor repertoire encodes a large collection of odor stimuli that vary widely in identity, intensity, and duration. May form a complex with Orco to form odorant-sensing units, providing sensitive and prolonged odorant signaling and calcium permeability. Involved in olfactory communication for modulating aggression through the sensing of the male-specific pheromone 11-cis-vaccenyl acetate (cVA). Although acute exposure to cVA elicites aggression through Or67d olfactory receptor neurons (ORNs), chronic cVA exposure reduces aggression through Or65a ORNs. Moreover, cVA leads to generalized learning with mated females. It is a major component of the male cuticular hydrocarbon profile, but it is not found on virgin females. During copulation, cVA is transferred to the female in ejaculate along with sperm and peptides that decrease her sexual receptivity. This chain is Odorant receptor 65a (Or65a), found in Drosophila melanogaster (Fruit fly).